The chain runs to 356 residues: Protein MGF 360-3L (356 aa).

The stretch at 61–93 is one ANK repeat; the sequence is KLNTALVLAVKENNDDLIMLFTEWGANINYGLL.

Belongs to the asfivirus MGF 360 family.

Functionally, plays a role in virus cell tropism, and may be required for efficient virus replication in macrophages. This is Protein MGF 360-3L from Ornithodoros (relapsing fever ticks).